The primary structure comprises 187 residues: Calcium and integrin-binding family member 2 (187 aa).

3 EF-hand domains span residues 66-101, 103-138, and 144-179; these read KENP…LSEM, PREL…LTKE, and EVNL…APDF. 5 residues coordinate Ca(2+): aspartate 157, aspartate 159, aspartate 161, lysine 163, and aspartate 168.

In terms of assembly, monomer. Homodimer. Enriched in central and striolar hair cells.

The protein resides in the cytoplasm. It is found in the cell projection. It localises to the stereocilium. The protein localises to the photoreceptor inner segment. Its subcellular location is the cilium. The protein resides in the photoreceptor outer segment. It is found in the cell membrane. It localises to the sarcolemma. Functionally, calcium- and integrin-binding protein. Plays a role in intracellular calcium homeostasis. Critical for proper photoreceptor cell maintenance and function. Essential for development, maintenance and function of mechanosensory hair cells. The polypeptide is Calcium and integrin-binding family member 2 (Danio rerio (Zebrafish)).